The chain runs to 297 residues: T-cell leukemia homeobox protein 3 (297 aa).

Residues 1-68 (MEPAAGAQGP…LGGPRGGAPY (68 aa)) form a disordered region. The segment covering 32–52 (APPPPPPPPPPPPPPPPPPRG) has biased composition (pro residues). Residues 172-231 (RKKPRTSFSRVQICELEKRFHRQKYLASAERAALAKSLKMTDAQVKTWFQNRRTKWRRQT) constitute a DNA-binding region (homeobox).

In terms of tissue distribution, expression is restricted to neurons in the peripheral and central nervous system.

Its subcellular location is the nucleus. Its function is as follows. Seems to be involved in the development of cranial sensory innervation from peripheral ganglia. This chain is T-cell leukemia homeobox protein 3 (TLX3), found in Gallus gallus (Chicken).